A 153-amino-acid chain; its full sequence is uncharacterized protein (153 aa).

The segment at 17-78 (IYIHTPHPHP…HTTLSNLSLN (62 aa)) is disordered. The span at 22-38 (PHPHPHPHPHTPTHTHP) shows a compositional bias: basic residues.

This is an uncharacterized protein from Saccharomyces cerevisiae (strain ATCC 204508 / S288c) (Baker's yeast).